We begin with the raw amino-acid sequence, 120 residues long: Transcription elongation factor SPT4 (120 aa).

Residues 1-39 (MSASVPADLRNLRACLLCSLVKSVESFQKEGCENCEDVL) are interaction with spt-5. The segment at 15–35 (CLLCSLVKSVESFQKEGCENC) adopts a C4-type zinc-finger fold.

The protein belongs to the SPT4 family. Interacts with spt-5 to form DSIF. DSIF interacts with RNA polymerase II and with the positive transcription elongation factor b complex (P-TEFb complex), which is composed of cdk-9 and cyclin-T (cit-1.1 or cit-1.2).

Its subcellular location is the nucleus. In terms of biological role, may function as a component of the DRB sensitivity-inducing factor complex (DSIF complex), which regulates transcription elongation by RNA polymerase II. DSIF may enhance transcriptional pausing at sites proximal to the promoter, which may in turn facilitate the assembly of an elongation competent RNA polymerase II complex. The polypeptide is Transcription elongation factor SPT4 (spt-4) (Caenorhabditis elegans).